Reading from the N-terminus, the 356-residue chain is MYLSDFYFDLPDELIARYPKRERSSSRMLQLNGQNGELFHRTFSDVADLINEGDLLIFNNTRVIPARMFGRKASGGKIEVLVERVLNEHHFLAHIRSSKSPKENTVLFLGEDKLGEGKGVEMLMKARHENLFELELSDKSTALLDILQKIGHMPLPPYIDRPDEDADKERYQTVYNKVPGAVAAPTAGLHFDDELLTQLKNKGVNFAFVTLHVGAGTFQPVRVENIEDHKMHAEYVEVPQEVVDAVLATKAKGKRVIAVGTTSVRSIESAALFAEENNSTHLLEPYFSDTSIFIYPGKKFRVIDCLITNFHLPESTLIMLVSAFAGYQHTMNAYKSAVENRYRFFSYGDAMFITKA.

Belongs to the QueA family. In terms of assembly, monomer.

The protein localises to the cytoplasm. It catalyses the reaction 7-aminomethyl-7-carbaguanosine(34) in tRNA + S-adenosyl-L-methionine = epoxyqueuosine(34) in tRNA + adenine + L-methionine + 2 H(+). It functions in the pathway tRNA modification; tRNA-queuosine biosynthesis. Transfers and isomerizes the ribose moiety from AdoMet to the 7-aminomethyl group of 7-deazaguanine (preQ1-tRNA) to give epoxyqueuosine (oQ-tRNA). This chain is S-adenosylmethionine:tRNA ribosyltransferase-isomerase, found in Histophilus somni (strain 2336) (Haemophilus somnus).